Here is a 232-residue protein sequence, read N- to C-terminus: Large ribosomal subunit protein uL1 (232 aa).

Belongs to the universal ribosomal protein uL1 family. Part of the 50S ribosomal subunit.

In terms of biological role, binds directly to 23S rRNA. The L1 stalk is quite mobile in the ribosome, and is involved in E site tRNA release. Functionally, protein L1 is also a translational repressor protein, it controls the translation of the L11 operon by binding to its mRNA. This is Large ribosomal subunit protein uL1 from Sinorhizobium medicae (strain WSM419) (Ensifer medicae).